The chain runs to 499 residues: Glutamyl-tRNA(Gln) amidotransferase subunit A (499 aa).

Active-site charge relay system residues include lysine 75 and serine 150. Serine 174 acts as the Acyl-ester intermediate in catalysis.

This sequence belongs to the amidase family. GatA subfamily. As to quaternary structure, heterotrimer of A, B and C subunits.

It carries out the reaction L-glutamyl-tRNA(Gln) + L-glutamine + ATP + H2O = L-glutaminyl-tRNA(Gln) + L-glutamate + ADP + phosphate + H(+). Its function is as follows. Allows the formation of correctly charged Gln-tRNA(Gln) through the transamidation of misacylated Glu-tRNA(Gln) in organisms which lack glutaminyl-tRNA synthetase. The reaction takes place in the presence of glutamine and ATP through an activated gamma-phospho-Glu-tRNA(Gln). The chain is Glutamyl-tRNA(Gln) amidotransferase subunit A from Ralstonia pickettii (strain 12J).